Consider the following 419-residue polypeptide: L-rhamnose isomerase (419 aa).

The Mn(2+) site is built by His262, Asp294, and Asp296.

This sequence belongs to the rhamnose isomerase family. Homotetramer. Mn(2+) is required as a cofactor.

The protein localises to the cytoplasm. It carries out the reaction L-rhamnopyranose = L-rhamnulose. The protein operates within carbohydrate degradation; L-rhamnose degradation; glycerone phosphate from L-rhamnose: step 1/3. In terms of biological role, catalyzes the interconversion of L-rhamnose and L-rhamnulose. This chain is L-rhamnose isomerase, found in Escherichia coli O45:K1 (strain S88 / ExPEC).